A 324-amino-acid polypeptide reads, in one-letter code: NADH-ubiquinone oxidoreductase chain 1 (324 aa).

The next 8 helical transmembrane spans lie at Leu-3–Phe-23, Leu-73–Phe-93, Ile-106–Ala-126, Ala-151–Ile-171, Phe-175–Ala-195, Leu-226–Phe-246, Thr-255–Val-275, and Phe-295–Phe-315.

The protein belongs to the complex I subunit 1 family.

The protein localises to the mitochondrion inner membrane. It carries out the reaction a ubiquinone + NADH + 5 H(+)(in) = a ubiquinol + NAD(+) + 4 H(+)(out). Functionally, core subunit of the mitochondrial membrane respiratory chain NADH dehydrogenase (Complex I) that is believed to belong to the minimal assembly required for catalysis. Complex I functions in the transfer of electrons from NADH to the respiratory chain. The immediate electron acceptor for the enzyme is believed to be ubiquinone. This chain is NADH-ubiquinone oxidoreductase chain 1 (MT-ND1), found in Aquarana catesbeiana (American bullfrog).